A 206-amino-acid polypeptide reads, in one-letter code: Protein GET1 (206 aa).

The Lumenal segment spans residues 1-4 (MPSL). A helical transmembrane segment spans residues 5–24 (LITILLLNIVIYVINTIGAA). The Cytoplasmic portion of the chain corresponds to 25 to 110 (TIDSLLWLFY…SFDMTVKSVR (86 aa)). Residues 42–99 (SHMAREQRRLKREVIQLKREMNATSSQDEFAKWAKLRRRHDKALETYEAKNNELTQCK) are a coiled coil. The chain crosses the membrane as a helical span at residues 111–131 (WAATSGLMLFLQFWYSKRPIF). The Lumenal portion of the chain corresponds to 132–155 (TLPPGWIPWQVQWVLSFPRAPMGT). A helical transmembrane segment spans residues 156 to 172 (VSIQIWGGACATVVALV). At 173-206 (GDAVGATMGFVSASKKEGMKVGAGVGEKEGKKSQ) the chain is on the cytoplasmic side.

It belongs to the WRB/GET1 family. Interacts with GET3.

It is found in the endoplasmic reticulum membrane. Its function is as follows. Required for the post-translational delivery of tail-anchored (TA) proteins to the endoplasmic reticulum. Acts as a membrane receptor for soluble GET3, which recognizes and selectively binds the transmembrane domain of TA proteins in the cytosol. The chain is Protein GET1 from Ajellomyces dermatitidis (strain ER-3 / ATCC MYA-2586) (Blastomyces dermatitidis).